Here is a 556-residue protein sequence, read N- to C-terminus: Calcium-dependent protein kinase 5 (556 aa).

A disordered region spans residues 1-40; it reads MGNSCRGSFKDKLDEGDNNKPEDYSKTSTTNLSSNSDHSP. The N-myristoyl glycine moiety is linked to residue glycine 2. Residues 8-25 are compositionally biased toward basic and acidic residues; that stretch reads SFKDKLDEGDNNKPEDYS. Positions 26-39 are enriched in low complexity; it reads KTSTTNLSSNSDHS. The region spanning 97–355 is the Protein kinase domain; that stretch reads YTLSRKLGQG…AHEVLRHPWI (259 aa). ATP is bound by residues 103–111 and lysine 126; that span reads LGQGQFGTT. Aspartate 221 serves as the catalytic Proton acceptor. A Phosphoserine modification is found at serine 261. The segment at 361 to 391 is autoinhibitory domain; it reads APDRALDPAVLSRLKQFSAMNKLKKMALKVI. EF-hand domains lie at 398-433, 434-469, 470-505, and 509-539; these read EEIA…YGST, LKDT…LNKL, EREE…HGMA, and LEDI…GNAG. Positions 411, 413, 415, 422, 447, 449, 451, 453, 458, 483, 485, 487, 494, 517, 519, 521, 523, and 528 each coordinate Ca(2+).

Belongs to the protein kinase superfamily. Ser/Thr protein kinase family. CDPK subfamily.

The protein localises to the membrane. It catalyses the reaction L-seryl-[protein] + ATP = O-phospho-L-seryl-[protein] + ADP + H(+). It carries out the reaction L-threonyl-[protein] + ATP = O-phospho-L-threonyl-[protein] + ADP + H(+). Activated by calcium. Autophosphorylation may play an important role in the regulation of the kinase activity. Functionally, may play a role in signal transduction pathways that involve calcium as a second messenger. This is Calcium-dependent protein kinase 5 (CPK5) from Arabidopsis thaliana (Mouse-ear cress).